We begin with the raw amino-acid sequence, 1220 residues long: DNA-directed RNA polymerase subunit beta' (1220 aa).

Residues cysteine 61, cysteine 63, cysteine 76, and cysteine 79 each coordinate Zn(2+). Positions 450, 452, and 454 each coordinate Mg(2+). The disordered stretch occupies residues 1197–1220 (QPEVEQEPTPDIPKLDDVAKSFEE). Over residues 1209-1220 (PKLDDVAKSFEE) the composition is skewed to basic and acidic residues.

This sequence belongs to the RNA polymerase beta' chain family. In terms of assembly, the RNAP catalytic core consists of 2 alpha, 1 beta, 1 beta' and 1 omega subunit. When a sigma factor is associated with the core the holoenzyme is formed, which can initiate transcription. The cofactor is Mg(2+). Requires Zn(2+) as cofactor.

The catalysed reaction is RNA(n) + a ribonucleoside 5'-triphosphate = RNA(n+1) + diphosphate. Its function is as follows. DNA-dependent RNA polymerase catalyzes the transcription of DNA into RNA using the four ribonucleoside triphosphates as substrates. This is DNA-directed RNA polymerase subunit beta' from Leuconostoc citreum (strain KM20).